Here is a 111-residue protein sequence, read N- to C-terminus: Large ribosomal subunit protein uL24 (111 aa).

Residues 43 to 62 (TRHKKKDQTTKRAAKQSTGK) form a disordered region.

This sequence belongs to the universal ribosomal protein uL24 family. In terms of assembly, part of the 50S ribosomal subunit.

Its function is as follows. One of two assembly initiator proteins, it binds directly to the 5'-end of the 23S rRNA, where it nucleates assembly of the 50S subunit. Functionally, one of the proteins that surrounds the polypeptide exit tunnel on the outside of the subunit. The protein is Large ribosomal subunit protein uL24 of Mycoplasma pneumoniae (strain ATCC 29342 / M129 / Subtype 1) (Mycoplasmoides pneumoniae).